Here is a 313-residue protein sequence, read N- to C-terminus: WD repeat-containing protein 82-B (313 aa).

WD repeat units follow at residues 19–58 (ENSD…PKRT), 105–144 (GHSK…CQGL), 146–184 (HLQG…KGPF), 192–231 (DRTC…VMHT), 236–276 (NNSK…KVAV), and 280–313 (KHTG…TIDD).

This sequence belongs to the WD repeat SWD2 family. In terms of assembly, component of the SET1/COMPASS complex. Component of the PNUTS-PP1 phosphatase complex.

The protein resides in the nucleus. The protein localises to the chromosome. It is found in the cytoplasm. In terms of biological role, regulatory component of the SET1/COMPASS complex implicated in the tethering of this complex to transcriptional start sites of active genes. Facilitates histone H3 'Lys-4' methylation (H3K4me) via recruitment of the SETD1A or SETD1B to the 'Ser-5' phosphorylated C-terminal domain (CTD) of RNA polymerase II large subunit (POLR2A). Component of the PNUTS-PP1 protein phosphatase complex, a protein phosphatase 1 (PP1) complex that promotes RNA polymerase II transcription pause-release, allowing transcription elongation. This Xenopus laevis (African clawed frog) protein is WD repeat-containing protein 82-B (wdr82-b).